The primary structure comprises 655 residues: THO complex subunit 1 (655 aa).

2 disordered regions span residues 403–427 (ERPA…LGKG) and 539–574 (PSEE…AVTN). A Nuclear localization signal motif is present at residues 415 to 431 (RKRQAPEDFLGKGPDRK). Basic and acidic residues predominate over residues 418 to 427 (QAPEDFLGKG). Positions 563-574 (DSPSIQSKAVTN) are enriched in polar residues. The 83-residue stretch at 573–655 (TNSQMDEIAA…NNIADNLSET (83 aa)) folds into the Death domain.

As to quaternary structure, component of the THO complex. As to expression, expressed in the developing neuromast.

It localises to the nucleus. The protein resides in the nucleoplasm. The protein localises to the nucleus matrix. Its subcellular location is the cytoplasm. It is found in the cytosol. In terms of biological role, component of the THO subcomplex of the TREX complex which is thought to couple mRNA transcription, processing and nuclear export, and which specifically associates with spliced mRNA and not with unspliced pre-mRNA. Required for efficient export of polyadenylated RNA. The THOC1-THOC2-THOC3 core complex alone is sufficient to bind export factor NXF1-NXT1 and promote ATPase activity of DDX39B. TREX is recruited to spliced mRNAs by a transcription-independent mechanism, binds to mRNA upstream of the exon-junction complex (EJC) and is recruited in a splicing- and cap-dependent manner to a region near the 5' end of the mRNA where it functions in mRNA export to the cytoplasm via the TAP/NXF1 pathway. Regulates transcriptional elongation of a subset of genes. Involved in genome stability by preventing co-transcriptional R-loop formation. May play a role in hair cell formation, hence may be involved in hearing. Functionally, participates in an apoptotic pathway which is characterized by activation of caspase-6, increases in the expression of BAK1 and BCL2L1 and activation of NF-kappa-B. This pathway does not require p53/TP53, nor does the presence of p53/TP53 affect the efficiency of cell killing. Activates a G2/M cell cycle checkpoint prior to the onset of apoptosis. Apoptosis is inhibited by association with RB1. Essential for early embryonic development. Required for normal gene expression during postnatal testis development. The polypeptide is THO complex subunit 1 (thoc1) (Danio rerio (Zebrafish)).